A 344-amino-acid chain; its full sequence is AA9 family lytic polysaccharide monooxygenase J (344 aa).

An N-terminal signal peptide occupies residues 1–20 (MKSSLLVVLTAGLAVRDAIA). Positions 21 and 99 each coordinate Cu(2+). Residues Cys58 and Cys194 are joined by a disulfide bond. O2 is bound by residues His180 and Gln189. Tyr191 is a Cu(2+) binding site. Positions 272–301 (PGGKPASGGSDGNAPEVAEPSGGEGSPSAP) are disordered. The span at 285–301 (APEVAEPSGGEGSPSAP) shows a compositional bias: low complexity. The 38-residue stretch at 304–341 (CEVAAYGQCGGDQYSGCTQCASGYTCKAVSPPYYSQCA) folds into the CBM1 domain.

This sequence belongs to the polysaccharide monooxygenase AA9 family. Requires Cu(2+) as cofactor.

The protein localises to the secreted. The enzyme catalyses [(1-&gt;4)-beta-D-glucosyl]n+m + reduced acceptor + O2 = 4-dehydro-beta-D-glucosyl-[(1-&gt;4)-beta-D-glucosyl]n-1 + [(1-&gt;4)-beta-D-glucosyl]m + acceptor + H2O.. In terms of biological role, lytic polysaccharide monooxygenase (LPMO) that depolymerizes crystalline and amorphous polysaccharides via the oxidation of scissile alpha- or beta-(1-4)-glycosidic bonds, yielding C4 oxidation products. Catalysis by LPMOs requires the reduction of the active-site copper from Cu(II) to Cu(I) by a reducing agent and H(2)O(2) or O(2) as a cosubstrate. The protein is AA9 family lytic polysaccharide monooxygenase J (gh61-10) of Neurospora crassa (strain ATCC 24698 / 74-OR23-1A / CBS 708.71 / DSM 1257 / FGSC 987).